Consider the following 2131-residue polypeptide: Sodium channel protein para (2131 aa).

The Cytoplasmic segment spans residues 1-148 (MTEDSDSISE…FNPIRRVAIY (148 aa)). A compositionally biased stretch (basic and acidic residues) spans 35–48 (HEKQKELERKRAEG). The tract at residues 35–84 (HEKQKELERKRAEGEVPQYGRKKKQKEIRYDDEDEDEGPQPDPTLEQGVP) is disordered. The span at 64–73 (YDDEDEDEGP) shows a compositional bias: acidic residues. The I repeat unit spans residues 134-467 (WMLDPFNPIR…AAKAAKLEER (334 aa)). Residues 149–172 (ILVHPLFSLFIITTILVNCILMIM) traverse the membrane as a helical segment. Topologically, residues 173 to 180 (PTTPTVES) are extracellular. A helical membrane pass occupies residues 181-199 (TEVIFTGIYTFESAVKVMA). The Cytoplasmic segment spans residues 200 to 212 (RGFILCPFTYLRD). The chain crosses the membrane as a helical span at residues 213–231 (AWNWLDFVVIALAYVTMGI). The Extracellular portion of the chain corresponds to 232–237 (DLGNLA). Residues 238–257 (ALRTFRVLRALKTVAIVPGL) traverse the membrane as a helical; Voltage-sensor segment. Topologically, residues 258 to 273 (KTIVGAVIESVKNLRD) are cytoplasmic. A helical membrane pass occupies residues 274-297 (VIILTMFSLSVFALMGLQIYMGVL). At 298-373 (TQKCIKKFPL…PNYGYTSFDS (76 aa)) the chain is on the extracellular side. C301 and C350 form a disulfide bridge. N-linked (GlcNAc...) asparagine glycans are attached at residues N313, N325, and N343. Positions 374 to 398 (FGWAFLSAFRLMTQDFWEDLYQLVL) form an intramembrane region, pore-forming. Residues 399–405 (RAAGPWH) are Extracellular-facing. Residues 406–427 (MLFFIVIIFLGSFYLVNLILAI) traverse the membrane as a helical segment. Over 428–812 (VAMSYDELQK…VWLKFQEWVS (385 aa)) the chain is Cytoplasmic. 2 positions are modified to phosphoserine; by PKA: S553 and S570. Disordered stretches follow at residues 553 to 572 (STTS…GSRS) and 671 to 691 (KESK…TNGG). Over residues 680–691 (TRNQSVGATNGG) the composition is skewed to polar residues. Residues 799 to 1069 (DCCWVWLKFQ…IAEAFNRIGR (271 aa)) form an II repeat. Residues 813–837 (LIVFDPFVELFITLCIVVNTMFMAM) traverse the membrane as a helical segment. Residues 838-848 (DHHDMNKEMER) lie on the Extracellular side of the membrane. The helical transmembrane segment at 849 to 873 (VLKSGNYFFTATFAIEATMKLMAMS) threads the bilayer. Over 874–880 (PKYYFQE) the chain is Cytoplasmic. A helical membrane pass occupies residues 881–900 (GWNIFDFIIVALSLLELGLE). The Extracellular portion of the chain corresponds to 901 to 906 (GVQGLS). The helical; Voltage-sensor transmembrane segment at 907 to 926 (VLRSFRLLRVFKLAKSWPTL) threads the bilayer. Over 927–941 (NLLISIMGRTMGALG) the chain is Cytoplasmic. A helical transmembrane segment spans residues 942–963 (NLTFVLCIIIFIFAVMGMQLFG). The Extracellular portion of the chain corresponds to 964–985 (KNYHDHKDRFPDGDLPRWNFTD). N982 carries N-linked (GlcNAc...) asparagine glycosylation. Positions 986–1006 (FMHSFMIVFRVLCGEWIESMW) form an intramembrane region, pore-forming. Topologically, residues 1007-1013 (DCMYVGD) are extracellular. C1008 and C1016 are oxidised to a cystine. The helical transmembrane segment at 1014-1041 (VSCIPFFLATVVIGNLVVLNLFLALLLS) threads the bilayer. The Cytoplasmic portion of the chain corresponds to 1042–1296 (NFGSSSLSAP…WGNLRLKTFQ (255 aa)). Residues 1166 to 1240 (DMKNNKPKKS…LDEEGECEEG (75 aa)) form a disordered region. Residues 1177–1194 (YLNNATDDDTASINSYGS) are compositionally biased toward polar residues. Residues 1199 to 1225 (PFKDESHKGSAETMEGEEKRDASKEDL) are compositionally biased toward basic and acidic residues. Residues 1226 to 1240 (GLDEELDEEGECEEG) are compositionally biased toward acidic residues. An III repeat occupies 1284-1591 (WQGWGNLRLK…QKKYYNAMKK (308 aa)). The helical transmembrane segment at 1297–1320 (LIENKYFETAVITMILMSSLALAL) threads the bilayer. The Extracellular segment spans residues 1321 to 1334 (EDVHLPQRPILQDI). A helical transmembrane segment spans residues 1335–1359 (LYYMDRIFTVIFFLEMLIKWLALGF). At 1360 to 1365 (KVYFTN) the chain is on the cytoplasmic side. A helical membrane pass occupies residues 1366 to 1387 (AWCWLDFVIVMVSLINFVASLV). The Extracellular segment spans residues 1388 to 1391 (GAGG). The helical; Voltage-sensor transmembrane segment at 1392-1413 (IQAFKTMRTLRALRPLRAMSRM) threads the bilayer. Residues 1414–1432 (QGMRVVVNALVQAIPSIFN) lie on the Cytoplasmic side of the membrane. The helical transmembrane segment at 1433 to 1454 (VLLVCLIFWLIFAIMGVQLFAG) threads the bilayer. The Extracellular portion of the chain corresponds to 1455–1495 (KYFKCEDMNGTKLSHEIIPNRNACESENYTWVNSAMNFDHV). N1463 and N1482 each carry an N-linked (GlcNAc...) asparagine glycan. An intramembrane region (pore-forming) is located at residues 1496–1517 (GNAYLCLFQVATFKGWIQIMND). The Extracellular portion of the chain corresponds to 1518-1533 (AIDSREVDKQPIRETN). The chain crosses the membrane as a helical span at residues 1534–1560 (IYMYLYFVFFIIFGSFFTLNLFIGVII). At 1561-1614 (DNFNEQKKKAGGSLEMFMTEDQKKYYNAMKKMGSKKPLKAIPRPRWRPQAIVFE) the chain is on the cytoplasmic side. Residues 1601–1862 (IPRPRWRPQA…NMYIAVILEN (262 aa)) form an IV repeat. The helical transmembrane segment at 1615-1638 (IVTDKKFDIIIMLFIGLNMFTMTL) threads the bilayer. At 1639-1649 (DRYDASDTYNA) the chain is on the extracellular side. The chain crosses the membrane as a helical span at residues 1650-1673 (VLDYLNAIFVVIFSSECLLKIFAL). The Cytoplasmic segment spans residues 1674-1679 (RYHYFI). The helical transmembrane segment at 1680 to 1703 (EPWNLFDVVVVILSILGLVLSDII) threads the bilayer. Residues 1704 to 1713 (EKYFVSPTLL) are Extracellular-facing. Residues 1714 to 1735 (RVVRVAKVGRVLRLVKGAKGIR) traverse the membrane as a helical; Voltage-sensor segment. Topologically, residues 1736-1750 (TLLFALAMSLPALFN) are cytoplasmic. Residues 1751 to 1773 (ICLLLFLVMFIFAIFGMSFFMHV) traverse the membrane as a helical segment. Topologically, residues 1774–1787 (KEKSGINDVYNFKT) are extracellular. The segment at residues 1788 to 1810 (FGQSMILLFQMSTSAGWDGVLDA) is an intramembrane region (pore-forming). At 1811–1835 (IINEEACDPPDNDKGYPGNCGSATV) the chain is on the extracellular side. A helical transmembrane segment spans residues 1836-1860 (GITFLLSYLVISFLIVINMYIAVIL). The Cytoplasmic segment spans residues 1861-2131 (ENYSQATEDV…PSITSRTADV (271 aa)). The region spanning 1877–1912 (DDYDMYYEIWQQFDPEGTQYIRYDQLSEFLDVLEPP) is the EF-hand domain. Positions 2001-2096 (HKARGEGGGS…GSPGAGSAGR (96 aa)) are disordered. A compositionally biased stretch (acidic residues) spans 2021-2035 (GDPDAGDPAPDEATD). The segment covering 2068 to 2088 (AAAAAAAAAAAAAAGTTTAGS) has biased composition (low complexity).

The protein belongs to the sodium channel (TC 1.A.1.10) family. Para subfamily.

Its subcellular location is the cell membrane. In terms of biological role, mediates the voltage-dependent sodium ion permeability of excitable membranes. Assuming opened or closed conformations in response to the voltage difference across the membrane, the protein forms a sodium-selective channel through which Na(+) ions may pass in accordance with their electrochemical gradient. The protein is Sodium channel protein para (para) of Drosophila melanogaster (Fruit fly).